We begin with the raw amino-acid sequence, 453 residues long: Autophagy-related protein 21 (453 aa).

The WD 1 repeat unit spans residues 4-137 (LRFNQDASCC…NDQIFIYDIS (134 aa)). The segment at 177-207 (GNELDRIRSKSNNNNDQTNSDNGRSRTYSIN) is disordered. Residues 187–198 (SNNNNDQTNSDN) show a composition bias toward low complexity. WD repeat units lie at residues 252 to 347 (NLKP…RTDD) and 419 to 453 (FDNK…SHFI). A L/FRRG motif motif is present at residues 310–314 (FRRGS).

Belongs to the WD repeat PROPPIN family.

It is found in the cytoplasm. The protein localises to the membrane. Its subcellular location is the vacuole membrane. Functionally, required for cytoplasm to vacuole transport (Cvt) vesicles formation and mitophagy. Involved in binding of phosphatidylethanolamine to ATG8 and in recruitment of ATG8 and ATG5 to the pre-autophagosomal structure. Protects ATG8 from ARG4-mediated cleavage. The polypeptide is Autophagy-related protein 21 (ATG21) (Candida glabrata (strain ATCC 2001 / BCRC 20586 / JCM 3761 / NBRC 0622 / NRRL Y-65 / CBS 138) (Yeast)).